A 181-amino-acid polypeptide reads, in one-letter code: Large ribosomal subunit protein uL5c (181 aa).

Belongs to the universal ribosomal protein uL5 family. As to quaternary structure, part of the 50S ribosomal subunit; contacts the 5S rRNA.

Its subcellular location is the plastid. In terms of biological role, binds 5S rRNA, forms part of the central protuberance of the 50S subunit. The chain is Large ribosomal subunit protein uL5c (rpl5) from Helicosporidium sp. subsp. Simulium jonesii (Green alga).